Consider the following 142-residue polypeptide: ATP synthase epsilon chain (142 aa).

The protein belongs to the ATPase epsilon chain family. F-type ATPases have 2 components, CF(1) - the catalytic core - and CF(0) - the membrane proton channel. CF(1) has five subunits: alpha(3), beta(3), gamma(1), delta(1), epsilon(1). CF(0) has three main subunits: a, b and c.

The protein resides in the cell inner membrane. Produces ATP from ADP in the presence of a proton gradient across the membrane. The protein is ATP synthase epsilon chain of Shewanella baltica (strain OS155 / ATCC BAA-1091).